The following is a 365-amino-acid chain: TD and POZ domain-containing protein 1-like (365 aa).

The MATH domain occupies 19-149; the sequence is KFCYKWTISN…EDQLTICCKV (131 aa). The 68-residue stretch at 188 to 255 folds into the BTB domain; the sequence is TDCCLLVAGH…IYTGKAPYLH (68 aa).

It belongs to the Tdpoz family.

The protein is TD and POZ domain-containing protein 1-like of Mus musculus (Mouse).